Here is an 89-residue protein sequence, read N- to C-terminus: Small ribosomal subunit protein bS20 (89 aa).

Belongs to the bacterial ribosomal protein bS20 family.

Its function is as follows. Binds directly to 16S ribosomal RNA. The sequence is that of Small ribosomal subunit protein bS20 from Helicobacter pylori (strain P12).